The following is a 416-amino-acid chain: Homogentisate 1,2-dioxygenase (416 aa).

The active-site Proton acceptor is the His-275. Fe cation contacts are provided by His-318 and Glu-324. Homogentisate contacts are provided by Tyr-333 and His-354. His-354 provides a ligand contact to Fe cation.

The protein belongs to the homogentisate dioxygenase family. In terms of assembly, hexamer; dimer of trimers. Fe cation is required as a cofactor.

The catalysed reaction is homogentisate + O2 = 4-maleylacetoacetate + H(+). It participates in amino-acid degradation; L-phenylalanine degradation; acetoacetate and fumarate from L-phenylalanine: step 4/6. Its function is as follows. Involved in the catabolism of homogentisate (2,5-dihydroxyphenylacetate or 2,5-OH-PhAc), a central intermediate in the degradation of phenylalanine and tyrosine. Catalyzes the oxidative ring cleavage of the aromatic ring of homogentisate to yield maleylacetoacetate. The sequence is that of Homogentisate 1,2-dioxygenase from Legionella pneumophila subsp. pneumophila (strain Philadelphia 1 / ATCC 33152 / DSM 7513).